The chain runs to 723 residues: Polyribonucleotide nucleotidyltransferase (723 aa).

2 residues coordinate Mg(2+): D487 and D493. Residues 554–613 (PKILIMHINPDKIREVIGPSGKQINKIIDETGVKIDIEQDGTIFISSVDEAANQKAKQII) form the KH domain. Residues 623–691 (GQVYLGKVKR…KQGRVNLSRK (69 aa)) form the S1 motif domain. A disordered region spans residues 702–723 (GELPRESREKRGRRPERHRMKP). A compositionally biased stretch (basic residues) spans 711–723 (KRGRRPERHRMKP).

Belongs to the polyribonucleotide nucleotidyltransferase family. Requires Mg(2+) as cofactor.

It is found in the cytoplasm. The catalysed reaction is RNA(n+1) + phosphate = RNA(n) + a ribonucleoside 5'-diphosphate. Involved in mRNA degradation. Catalyzes the phosphorolysis of single-stranded polyribonucleotides processively in the 3'- to 5'-direction. The sequence is that of Polyribonucleotide nucleotidyltransferase from Geobacillus kaustophilus (strain HTA426).